The sequence spans 357 residues: bZIP transcription factor 23 (357 aa).

Residues 166–185 (PPVPPAPTPTAAAVPPPPPP) are disordered. Positions 275–338 (VERRQRRMIK…KNEVLERMSR (64 aa)) constitute a bZIP domain. Positions 277-296 (RRQRRMIKNRESAARSRQRK) are basic motif. The interval 303-317 (LEAEVAKLKELNDEL) is leucine-zipper.

It belongs to the bZIP family. ABI5 subfamily. Highly expressed in leaves.

Its subcellular location is the nucleus. In terms of biological role, transcriptional activator that mediates abscisic acid (ABA) signaling. Can regulate the expression of a wide spectrum of stress-related genes in response to abiotic stresses through an ABA-dependent regulation pathway. Confers ABA-dependent drought and salinity tolerance. Binds specifically to the ABA-responsive elements (ABRE) in the promoter of target genes to mediate stress-responsive ABA signaling. In Oryza sativa subsp. japonica (Rice), this protein is bZIP transcription factor 23.